The following is a 136-amino-acid chain: HTH-type transcriptional regulator CysB (136 aa).

The region spanning 1–59 (MDVRQLRSLVTLVEVRFSVSRAAECLHLVQSAVTQHLKQLEAELGTRLFVRHGKRLVGL) is the HTH lysR-type domain. The segment at residues 19-38 (VSRAAECLHLVQSAVTQHLK) is a DNA-binding region (H-T-H motif).

The protein belongs to the LysR transcriptional regulatory family.

Functionally, this protein is a positive regulator of gene expression for the cysteine regulon. The protein is HTH-type transcriptional regulator CysB (cysB) of Thiocapsa roseopersicina.